A 500-amino-acid polypeptide reads, in one-letter code: Putative antiporter subunit mnhD2 (500 aa).

A run of 14 helical transmembrane segments spans residues 2–22 (MSNL…ILVF), 32–52 (ILSI…LIYV), 78–98 (LSLL…AYGF), 108–128 (FHLP…FLTS), 130–150 (LFNL…LVTL), 161–181 (IVYV…IGML), 209–229 (ISLV…FMWL), 240–260 (LAAL…IRFF), 273–293 (TLLV…VIAY), 308–328 (IGFI…GAIF), 330–350 (LAND…LVYM), 368–388 (FFGV…PFSG), 403–423 (GNYI…YSLF), and 450–470 (GLLS…PVVL).

Belongs to the CPA3 antiporters (TC 2.A.63) subunit D family. In terms of assembly, may form a heterooligomeric complex that consists of seven subunits: mnhA2, mnhB2, mnhC2, mnhD2, mnhE2, mnhF2 and mnhG2.

The protein resides in the cell membrane. This is Putative antiporter subunit mnhD2 (mnhD2) from Staphylococcus epidermidis (strain ATCC 12228 / FDA PCI 1200).